Consider the following 227-residue polypeptide: Large ribosomal subunit protein uL1 (227 aa).

It belongs to the universal ribosomal protein uL1 family. In terms of assembly, part of the 50S ribosomal subunit.

In terms of biological role, binds directly to 23S rRNA. The L1 stalk is quite mobile in the ribosome, and is involved in E site tRNA release. Its function is as follows. Protein L1 is also a translational repressor protein, it controls the translation of the L11 operon by binding to its mRNA. In Mesoplasma florum (strain ATCC 33453 / NBRC 100688 / NCTC 11704 / L1) (Acholeplasma florum), this protein is Large ribosomal subunit protein uL1.